Reading from the N-terminus, the 67-residue chain is uncharacterized protein (67 aa).

2 helical membrane-spanning segments follow: residues 10 to 30 (EFFI…IIMW) and 40 to 60 (LMVG…WMVF).

The protein belongs to the plectrovirus ORF10 family.

It localises to the host membrane. This is an uncharacterized protein from Spiroplasma melliferum (SpV1).